We begin with the raw amino-acid sequence, 477 residues long: Bifunctional protein HldE (477 aa).

The segment at M1 to T318 is ribokinase. Position 179 is an N6-acetyllysine (K179). N195–E198 serves as a coordination point for ATP. Residue D264 is part of the active site. The cytidylyltransferase stretch occupies residues M344 to G477.

It in the N-terminal section; belongs to the carbohydrate kinase PfkB family. In the C-terminal section; belongs to the cytidylyltransferase family. As to quaternary structure, homodimer.

The catalysed reaction is D-glycero-beta-D-manno-heptose 7-phosphate + ATP = D-glycero-beta-D-manno-heptose 1,7-bisphosphate + ADP + H(+). The enzyme catalyses D-glycero-beta-D-manno-heptose 1-phosphate + ATP + H(+) = ADP-D-glycero-beta-D-manno-heptose + diphosphate. Its pathway is nucleotide-sugar biosynthesis; ADP-L-glycero-beta-D-manno-heptose biosynthesis; ADP-L-glycero-beta-D-manno-heptose from D-glycero-beta-D-manno-heptose 7-phosphate: step 1/4. It functions in the pathway nucleotide-sugar biosynthesis; ADP-L-glycero-beta-D-manno-heptose biosynthesis; ADP-L-glycero-beta-D-manno-heptose from D-glycero-beta-D-manno-heptose 7-phosphate: step 3/4. The protein operates within bacterial outer membrane biogenesis; LPS core biosynthesis. Functionally, catalyzes the phosphorylation of D-glycero-D-manno-heptose 7-phosphate at the C-1 position to selectively form D-glycero-beta-D-manno-heptose-1,7-bisphosphate. Catalyzes the ADP transfer from ATP to D-glycero-beta-D-manno-heptose 1-phosphate, yielding ADP-D-glycero-beta-D-manno-heptose. In Escherichia coli O157:H7, this protein is Bifunctional protein HldE.